A 65-amino-acid polypeptide reads, in one-letter code: Large ribosomal subunit protein bL35 (65 aa).

Belongs to the bacterial ribosomal protein bL35 family.

The protein is Large ribosomal subunit protein bL35 of Rubrobacter xylanophilus (strain DSM 9941 / JCM 11954 / NBRC 16129 / PRD-1).